A 148-amino-acid chain; its full sequence is U2 snRNP component IST3 (148 aa).

Residues 31–109 (AYIYIGNLNR…RALKIDHTFY (79 aa)) form the RRM domain.

The protein belongs to the IST3 family. Component of the 45S U1.U2.U4/U6.U5 penta-snRNP particle, a subcomplex of the spliceosome. Belongs to the CWC complex (or CEF1-associated complex), a spliceosome sub-complex reminiscent of a late-stage spliceosome composed of the U2, U5 and U6 snRNAs and at least BUD13, BUD31, BRR2, CDC40, CEF1, CLF1, CUS1, CWC2, CWC15, CWC21, CWC22, CWC23, CWC24, CWC25, CWC27, ECM2, HSH155, IST3, ISY1, LEA1, MSL1, NTC20, PRP8, PRP9, PRP11, PRP19, PRP21, PRP22, PRP45, PRP46, SLU7, SMB1, SMD1, SMD2, SMD3, SMX2, SMX3, SNT309, SNU114, SPP2, SYF1, SYF2, RSE1 and YJU2. Belongs to the pre-mRNA retention and splicing (RES) complex composed of at least BUD13, IST3 and PML1. Subunit of the U2 snRNP. Interacts with RDS3.

It localises to the cytoplasm. The protein localises to the nucleus. Its function is as follows. Required for pre-mRNA splicing and spliceosome assembly. As part of the pre-mRNA retention and splicing (RES) complex, required for nuclear pre-mRNA retention and efficient splicing. Required for MER1-activated splicing. This Saccharomyces cerevisiae (strain ATCC 204508 / S288c) (Baker's yeast) protein is U2 snRNP component IST3 (IST3).